The chain runs to 2234 residues: MPLFLSALLVLLLVALSALFLGRWLVVRLATRWCQRKLQAELKIGSFRFFWIQNVSLKFQQHQQTVEIDNLWISSKLLSHDLPNYVALCFGEVRIRTDLQKVSSLSAPFSQNTEVEQKELSLSPSLLKIFCQLFSIHVDAINIMVLKVATSESLWHIQISRSRFLLDSDGKSLICKVNLSKINSKVLKSGQLEDTCLVELSLALDLRLQVSVSSWHLTAVTVDVWTLHAELHEGLFHSQLLCHAPGRISKSVSCSDLTENFAEPTLPGLYLLQRLPDQVKVKMENTSVVLSMNSQKRHLTWTLKLLHFLYHRDEDQLPLRSFTANYDMAQMSTELLLEDGLLLSQSRQRIVCLNSLKANVQVTTIDLSASLVLNTCIIHYRHQEFSHWLLMLALETQGASSPDLKQRKKRTFPQILAPIIFSTSVSNVSISIQLGDTPPFALGFNSISLDYQHLRPQSIHQRAVLTVDHLCWRVGSDSHIQRAPHPPNMHVWGEALVLDSFTLQGSYNQPLGLSSTQSNTLFLDCTIRGLQVEISDICAQCLSRVLSLVIPQSERSAVSRKSSLGESVTLLWKVDLKVEDMNLFTLSALVGASELRLDTLTVLGSAETSTVGIQGLVLALVKSVTEKMQPCCKAPDIPTPVLGLSMLSLTYHSSIRSLEVQCGAGLTLLWSPPDHMYLYQHVRATLQCRDLLRATVFPEIIESHSLNTPQSTWEPEDHLPESSLPRRLLTLTLEVSTAKLTAFVAEDKFITLAAESVSLNRHGGSLQAYCPELAAGFDGNSIFNLKEVEVQLLPELEEMILHRNPFPALQTLRNRVWLLSLGSVSVEFPYQYDFSRTLDEAVGVQKWLKGLHRGTHAWASPSPAPLPPDLLLKVQHFSWVFLDDIFEVKLHDNYELMKDESKESAKRLQLLDAKVAALRKQHGELLPARKIEELYASLERKNIEIYIQRSRRLYGNTPMRRALLTWSLAGLELVALADASFHGPEHVIEQVRELDPGSPFPAEGMDLVTQWCRMLKCNVKTFLVRIRDYPRYLFEIRDWRLMGRLAGTEQSGQPCSRRRQILHLGLPWGNVAVERNMPPLKFYHDFHSEIFQYTVVWGPCWDPAWTLIGQCVDLLTKPSADPSPPLPWWDKSRLLFHGDWHMDIEQANLHQLATEDPYNTTENMHWEWSHLSFHWKPGQFVFRGDLDVNVRTASKYDDCCFLHLPDLCMTLDLQWLCHGNPHDHHSVTLRAPEFLPEVPLGQLHDSYRAFRSENLNLSIKMDLTRHSGTISQPRILVYSSTLRWMQNFWATWTSITRPICRGKLFNNLKPSKKKLGQHYKQLSYTALFPQLQVHYWASFAQQRGIQIECSQGHVFTRGTQRLIPQAGTVMRRLISEWSVTQMVSDLSQVTVHLMASPTEENADHCLDPLITKTHLLSLSSLTYQRHSNRTTEEELSARDGDPAFHTHQLYLVDLRISWTTTNRDIAFGLYDGYKKAAVLKRNLSTEALKGLKIDPQMSAKKPKRGIPPSAQVPPHVSTPSFSGRPDKGSSGGAYMLQKLIEETDRFVVFTEEESGMSDQLCGIAACQTDDIYNRNCLIELVNCQMVLRGAETEGCVIVSAAKAQLLQCQHHPAWYGDTLKQKTSWTCLLDGMQYFATTESSPTEQDGRQLWLEVKNIEEHRERSLDSVQELMESGQAVGGMVTTTTDWNQPAEAQQAQQVQRIISRCNCRMYYISYSHDIDPELATQIKPPEVHENQEKEDLLKKQEGAVDTFTLIHHELEISTNPAQYAMILDIVNNLLLHVEPKRKEHSEKKQRVRFQLEISSNPEEQRSSILHLQEAVRQHVAQIRHLEKQMYSIMKSLQDDSKNENLLDLNQKLQLQLNQEKANLQLESEELNILIRCFKDFQLQRANKMELRKQQEDVSVVRRTEFYFAQARWRLTEEDGQLGIAELELQRFLYSKVNKSDDTAEHLLELGWFTMNNLLPNAIYKVVLRPQSSCQSGRQLALRLFSKVRPPVGGISVKEHFEVNVVPLTIQLSHRFFHRMMGFFFPGRNVEDDEVGDEEDKSKLVTTGIPVVKPRQLIATDDAVPLGSGKGVAQGLTRSSGVRRSFRKLPEHPVDDIDKMKERAAMNNSFIYIKIPQVPLCVSYKGEKNSVDWGDLNLVLPCLEYHNNTWTWLDFAMAVKRDSRKALVAQVIKEKLRLKPATGSEVRGKLETKCDLNMQQQEEEKARLLIGLSVGDKNPGKKSIFGRRK.

The N-terminal stretch at 1–31 (MPLFLSALLVLLLVALSALFLGRWLVVRLAT) is a signal peptide. The segment at 29-108 (LATRWCQRKL…LQKVSSLSAP (80 aa)) is transmembrane domain. The residue at position 563 (Ser563) is a Phosphoserine. The interval 1496–1529 (QMSAKKPKRGIPPSAQVPPHVSTPSFSGRPDKGS) is disordered. Residues 1814–1885 (ILHLQEAVRQ…LNILIRCFKD (72 aa)) are a coiled coil. Phosphoserine occurs at positions 1846 and 2090.

It belongs to the SABRE family.

It localises to the cell membrane. It is found in the endoplasmic reticulum membrane. The protein localises to the mitochondrion membrane. In terms of biological role, tube-forming lipid transport protein which binds to phosphatidylinositols and affects phosphatidylinositol-4,5-bisphosphate (PtdIns-4,5-P2) distribution. The sequence is that of Bridge-like lipid transfer protein family member 2 (Bltp2) from Mus musculus (Mouse).